A 3930-amino-acid chain; its full sequence is Hybrid PKS-NRPS synthetase apdA (3930 aa).

Positions 2–440 constitute a Ketosynthase family 3 (KS3) domain; it reads QDLIAIVGSA…GTNAHAIIEG (439 aa). Active-site for beta-ketoacyl synthase activity residues include Cys176, His313, and His361. The malonyl-CoA:ACP transacylase (MAT) domain stretch occupies residues 557-879; it reads IFTGQGAQWA…MRRGDNEIEA (323 aa). Residues 948-1085 are N-terminal hotdog fold; sequence HELLGRRVPD…GRLIINYGDP (138 aa). The interval 948–1251 is dehydratase (DH) domain; sequence HELLGRRVPD…SMKSMSEPQP (304 aa). The region spanning 948–1252 is the PKS/mFAS DH domain; it reads HELLGRRVPD…MKSMSEPQPE (305 aa). His980 (proton acceptor; for dehydratase activity) is an active-site residue. Positions 1100 to 1252 are C-terminal hotdog fold; that stretch reads NVPVDMGRFY…MKSMSEPQPE (153 aa). Asp1159 (proton donor; for dehydratase activity) is an active-site residue. Positions 1389–1588 are methyltransferase (MT) domain; it reads QDDMLNRFYM…FSGLDCLAPD (200 aa). The segment at 2088 to 2229 is ketoreductase (KR) domain; it reads ATYLLAGMTG…SLASIIGNAA (142 aa). Residues 2326–2403 form the Carrier 1 domain; it reads AVIPIVQEAF…QICEDAVRQF (78 aa). Position 2363 is an O-(pantetheine 4'-phosphoryl)serine (Ser2363). Disordered regions lie at residues 2414–2433 and 2444–2494; these read VAPNMTEKPETKSHPSSNAT and DAAN…VDAD. Low complexity predominate over residues 2445 to 2473; sequence AANGDYESSSQGDDSRGNSSSSSSHTSPS. The tract at residues 2509–2937 is condensation (C) domain; it reads PASFAQSRLW…SLPVNQLPVT (429 aa). Residues 2971–3371 are adenylation (A) (KR) domain; the sequence is KSFPEETAIK…GTLIFMGRMD (401 aa). A reductase (RED) domain region spans residues 2971 to 3371; sequence KSFPEETAIK…GTLIFMGRMD (401 aa). The Carrier 2 domain occupies 3493 to 3572; it reads RHLSLAEGEL…QMARRISRRK (80 aa). Ser3532 is modified (O-(pantetheine 4'-phosphoryl)serine).

It in the C-terminal section; belongs to the NRP synthetase family.

The protein operates within secondary metabolite biosynthesis. Hybrid PKS-NRPS synthetase; part of the gene cluster that mediates the biosynthesis of aspyridones. The polyketide-amino acid backbone preaspyridone A is first assembled by the PKS-NRPS hybrid apdA. The assembly of preaspyridone A is initiated by loading of malonyl-CoA onto apdA, followed by decarboxylation to yield the acetyl starter unit. The growing polyketide chain then elongates into a tetraketide. The adpA PKS module catalyzes three Claisen condensations, as well as beta-keto processing and methylation. Alpha-methylation step during polyketide synthesis is a prerequisite and a key checkpoint for chain transfer between PKS and NRPS modules. The downstream NRPS module contains the condensation (C), adenylation (A), and thiolation (T) domains and catalyzes the incorporation of tyrosine via the formation of the L-tyrosinyl-thioester and the amide linkage between L-tyrosinyl-thioester and the tetraketide. The bimodular assembly line is terminated with a reductase (R) domain that facilitates formation and release of the tetramic acid product. Because apdA lacks a designated enoylreductase (ER) domain, the required activity is provided the enoyl reductase apdC. ApdC appears to operate with different stereoselectivity in different PKS cycle. Combined with apdC, apdA is proposed to synthesize preaspyridone A via about 20 enzymatic steps. A number of oxidative steps performed successively by the cytochrome P450 monooxygenases apdE and apdB are required for the conversion of preaspyridone A to aspyridone A. The cytochrome P450 monooxygenase apdE is responsible for the oxidative dephenylation of preaspyridone A. Finally, the predicted FAD-dependent monooxygenase apdD and the acyl-CoA dehydrogenase apdG may be involved in the transformation of aspyridone A into aspyridone B. This Emericella nidulans (strain FGSC A4 / ATCC 38163 / CBS 112.46 / NRRL 194 / M139) (Aspergillus nidulans) protein is Hybrid PKS-NRPS synthetase apdA.